A 223-amino-acid chain; its full sequence is MDLAALRTQQQQLAASVERADRLDRDPPALIGGADVGFEQEGEITRAAMVLLTWPELELVEYQVARVATSMPYIPGFLSFRETPALLAAWEQLSQKPDLLFVDGHGISHPRRLGVASHFGLMIDVPTIGVAKKRLCGKIGDLGDEPGALAPLMDKNEQLAWVWRSKVRCNPLFISTGHRVGMDSALMWVERCMRGYRLPEPTRWADAVASRRPSFVRWQANHS.

Residues Asp-35 and Asp-103 each contribute to the Mg(2+) site.

This sequence belongs to the endonuclease V family. It depends on Mg(2+) as a cofactor.

It localises to the cytoplasm. The catalysed reaction is Endonucleolytic cleavage at apurinic or apyrimidinic sites to products with a 5'-phosphate.. Its function is as follows. DNA repair enzyme involved in the repair of deaminated bases. Selectively cleaves double-stranded DNA at the second phosphodiester bond 3' to a deoxyinosine leaving behind the intact lesion on the nicked DNA. The chain is Endonuclease V from Klebsiella pneumoniae subsp. pneumoniae (strain ATCC 700721 / MGH 78578).